Here is a 284-residue protein sequence, read N- to C-terminus: Aspartate dehydrogenase domain-containing protein (284 aa).

This sequence belongs to the L-aspartate dehydrogenase family.

This Xenopus tropicalis (Western clawed frog) protein is Aspartate dehydrogenase domain-containing protein (aspdh).